Here is a 429-residue protein sequence, read N- to C-terminus: SH2 domain-containing protein 5 (429 aa).

One can recognise an SH2 domain in the interval Trp302–Tyr398.

Interacts with BCR. As to expression, highly expressed in brain, particularly in Purkinjie cells in the cerebellum and the cornu ammonis of the hippocampus.

It localises to the postsynaptic density. May be involved in synaptic plasticity regulation through the control of Rac-GTP levels. The polypeptide is SH2 domain-containing protein 5 (Mus musculus (Mouse)).